The chain runs to 224 residues: Claudin-19 (224 aa).

Residues 1–7 (MANSGLQ) are Cytoplasmic-facing. The helical transmembrane segment at 8–28 (LLGYFLALGGWVGIIASTALP) threads the bilayer. The Extracellular segment spans residues 29–81 (QWKQSSYAGDAIITAVGLYEGLWMSCASQSTGQVQCKLYDSLLALDGHIQSAR). C54 and C64 are joined by a disulfide. A helical membrane pass occupies residues 82-102 (ALMVVAVLLGFVAMVLSVVGM). Over 103–117 (KCTRVGDSNPIAKGR) the chain is Cytoplasmic. A helical transmembrane segment spans residues 118–138 (VAIAGGALFILAGLCTLTAVS). Over 139 to 160 (WYATLVTQEFFNPSTPVNARYE) the chain is Extracellular. The chain crosses the membrane as a helical span at residues 161-181 (FGPALFVGWASAGLAVLGGSF). The Cytoplasmic portion of the chain corresponds to 182–224 (LCCTCPEPERPNSSPQPYRPGPSAAAREPVVKLPASAKGPLGV). The interval 191–224 (RPNSSPQPYRPGPSAAAREPVVKLPASAKGPLGV) is disordered.

The protein belongs to the claudin family. In terms of assembly, can form homo- and heteropolymeric tight junction strands. Interacts with other claudins including CLDN3, CLDN10, CLDN16 and CLDN18 with highest affinity for CLDN16. Interacts (via PDZ-binding motif TRV) with TJP1 (via PDZ domain).

It is found in the cell junction. The protein resides in the tight junction. Its subcellular location is the cell membrane. It catalyses the reaction Mg(2+)(in) = Mg(2+)(out). It carries out the reaction Ca(2+)(in) = Ca(2+)(out). The enzyme catalyses Na(+)(in) = Na(+)(out). The catalysed reaction is K(+)(in) = K(+)(out). It catalyses the reaction Rb(+)(in) = Rb(+)(out). It carries out the reaction Cs(+)(in) = Cs(+)(out). The enzyme catalyses Li(+)(in) = Li(+)(out). In terms of biological role, forms paracellular channels: coassembles with CLDN16 into tight junction strands with cation-selective channels through the strands, conveying epithelial permeability in a process known as paracellular tight junction permeability. Involved in the maintenance of ion gradients along the nephron. In the thick ascending limb (TAL) of Henle's loop, facilitates sodium paracellular permeability from the interstitial compartment to the lumen, contributing to the lumen-positive transepithelial potential that drives paracellular magnesium and calcium reabsorption. Forms paracellular barriers on its own. In the peripheral nervous system, represents a major constituent of the tight junctions in Schwann cells and contributes to electrical sealing. During retinal neurogenesis, may regulate the barrier properties of tight junctions in retinal pigment epithelium, required for proper retinal tissue differentiation and vision. This chain is Claudin-19, found in Homo sapiens (Human).